The chain runs to 80 residues: Trefoil factor 3 (80 aa).

A signal peptide spans 1-23 (MEARVLWLLVVVLVLGSSSLAVA). The 44-residue stretch at 30–73 (NLCEVPPKDRVDCGYPEITSEQCVNRGCCFDSSIHGVPWCFKPL) folds into the P-type domain. 3 disulfide bridges follow: cysteine 32-cysteine 58, cysteine 42-cysteine 57, and cysteine 52-cysteine 69.

In terms of assembly, monomer. Homodimer; disulfide-linked.

It localises to the secreted. The protein resides in the extracellular space. Its subcellular location is the extracellular matrix. It is found in the cytoplasm. In terms of biological role, involved in the maintenance and repair of the intestinal mucosa. Promotes the mobility of epithelial cells in healing processes (motogen). This is Trefoil factor 3 (TFF3) from Canis lupus familiaris (Dog).